The sequence spans 335 residues: Protein PXR1 (335 aa).

The 47-residue stretch at 25–71 folds into the G-patch domain; it reads KSRFGHKYLEKLGWEPGKGLGHASHAMSTHIKVTIKDDTMGLGAKLK. The segment at 155–310 is disordered; that stretch reads DDAEDAKVSG…PPTISTRLSV (156 aa). Over residues 163 to 175 the composition is skewed to basic residues; sequence SGKHRDRKSRAKR. Over residues 183–209 the composition is skewed to basic and acidic residues; that stretch reads LKEKCRDIDRTRKSKRKEKEQEKEKNR. A compositionally biased stretch (basic residues) spans 226–257; the sequence is KKDKKDKKEKKEKKEKKEKKEKKHKEKSNKRL.

Belongs to the PINX1 family.

The protein localises to the nucleus. It is found in the nucleolus. Functionally, involved in rRNA-processing at A0, A1 and A2 sites and negatively regulates telomerase. This chain is Protein PXR1 (PXR1), found in Eremothecium gossypii (strain ATCC 10895 / CBS 109.51 / FGSC 9923 / NRRL Y-1056) (Yeast).